Consider the following 81-residue polypeptide: Small ribosomal subunit protein bS20 (81 aa).

Over residues 1–11 (MPNIKSQKKRV) the composition is skewed to basic residues. The segment at 1-20 (MPNIKSQKKRVLTNEKSRAS) is disordered.

This sequence belongs to the bacterial ribosomal protein bS20 family.

Its function is as follows. Binds directly to 16S ribosomal RNA. The sequence is that of Small ribosomal subunit protein bS20 from Mesoplasma florum (strain ATCC 33453 / NBRC 100688 / NCTC 11704 / L1) (Acholeplasma florum).